The following is a 265-amino-acid chain: Protein Exd1 homolog (265 aa).

In terms of domain architecture, 3'-5' exonuclease spans 32–82 (EKQLDRIVLIYQVDTTYHSALKDIKDQKIISLLVEPSFYGRHHPTSILVVA).

Belongs to the EXD1 family. In terms of assembly, homodimer.

Functionally, RNA-binding protein. Inactive exonuclease. This is Protein Exd1 homolog from Drosophila melanogaster (Fruit fly).